Consider the following 360-residue polypeptide: Protein phosphatase 1 regulatory subunit 7 (360 aa).

Positions 1-63 (MAAERGAGQQ…RGAEDPEEEH (63 aa)) are disordered. The residue at position 2 (alanine 2) is an N-acetylalanine. Serine 12, serine 24, serine 27, serine 44, and serine 47 each carry phosphoserine. Residues 17–34 (EVDRRVESEESGDEEGKK) are compositionally biased toward basic and acidic residues. LRR repeat units follow at residues 77-98 (DAED…EVLK), 99-120 (KVKS…DELQ), 121-142 (SLRE…EALT), 143-164 (ELEV…DKLT), 165-186 (QLKK…STLQ), 187-208 (QLQM…DTLT), 209-230 (NLES…DALS), 231-252 (NLTV…QNLV), 253-274 (NLRE…ENNN), 275-296 (KLTM…SHLT), and 297-318 (ELQE…DELK). Serine 322 carries the phosphoserine modification. An LRRCT domain is found at 331–360 (NPLQKDPQYRRKVMLALPSVRQIDATFVRF).

Belongs to the SDS22 family. In terms of assembly, interacts with PPP1CA, PPP1CB and PPP1CC/PPP1G.

Its subcellular location is the nucleus. In terms of biological role, regulatory subunit of protein phosphatase 1. This is Protein phosphatase 1 regulatory subunit 7 (Ppp1r7) from Rattus norvegicus (Rat).